The following is a 100-amino-acid chain: Urease subunit gamma (100 aa).

This sequence belongs to the urease gamma subunit family. Heterotrimer of UreA (gamma), UreB (beta) and UreC (alpha) subunits. Three heterotrimers associate to form the active enzyme.

Its subcellular location is the cytoplasm. The enzyme catalyses urea + 2 H2O + H(+) = hydrogencarbonate + 2 NH4(+). It functions in the pathway nitrogen metabolism; urea degradation; CO(2) and NH(3) from urea (urease route): step 1/1. The sequence is that of Urease subunit gamma from Cereibacter sphaeroides (strain ATCC 17025 / ATH 2.4.3) (Rhodobacter sphaeroides).